We begin with the raw amino-acid sequence, 35 residues long: Alpha-amanitin proprotein (35 aa).

Positions 1-10 (MSDINATRLP) are excised as a propeptide. (3R,4R)-4,5-dihydroxyisoleucine; in form alpha-amanitin is present on I11. I11 is subject to (3R,4S)-4-hydroxyisoleucine; in form gamma-amanitin. A cross-link (cyclopeptide (Ile-Pro)) is located at residues 11-18 (IWGIGCNP). The segment at residues 12–16 (WGIGC) is a cross-link (2'-cysteinyl-6'-hydroxytryptophan sulfoxide (Trp-Cys)). At P18 the chain carries 4-hydroxyproline. Residues 19-35 (CVGDDVTTLLTRGEALC) constitute a propeptide that is removed on maturation.

The protein belongs to the MSDIN fungal toxin family. In terms of processing, processed by the macrocyclase-peptidase enzyme POPB to yield a toxic cyclic decapeptide. POPB first removes 10 residues from the N-terminus. Conformational trapping of the remaining peptide forces the enzyme to release this intermediate rather than proceed to macrocyclization. The enzyme rebinds the remaining peptide in a different conformation and catalyzes macrocyclization of the N-terminal 8 residues.

Major toxin belonging to the bicyclic octapeptides amatoxins that acts by binding non-competitively to RNA polymerase II and greatly slowing the elongation of transcripts from target promoters. This is Alpha-amanitin proprotein from Amanita bisporigera (Destroying angel).